A 675-amino-acid polypeptide reads, in one-letter code: Methionine--tRNA ligase (675 aa).

The short motif at 15-25 (PYANGSIHLGH) is the 'HIGH' region element. Residues Cys146, Cys149, Cys159, and Cys162 each contribute to the Zn(2+) site. The 'KMSKS' region motif lies at 332 to 336 (KMSKS). Residue Lys335 coordinates ATP. The region spanning 573–675 (DFAKVDMRIA…SGAQPGMQVK (103 aa)) is the tRNA-binding domain.

It belongs to the class-I aminoacyl-tRNA synthetase family. MetG type 1 subfamily. As to quaternary structure, homodimer. It depends on Zn(2+) as a cofactor.

It localises to the cytoplasm. The enzyme catalyses tRNA(Met) + L-methionine + ATP = L-methionyl-tRNA(Met) + AMP + diphosphate. Is required not only for elongation of protein synthesis but also for the initiation of all mRNA translation through initiator tRNA(fMet) aminoacylation. This is Methionine--tRNA ligase from Yersinia pestis bv. Antiqua (strain Angola).